Consider the following 1164-residue polypeptide: DNA-directed RNA polymerase 132 kDa polypeptide (1164 aa).

It belongs to the RNA polymerase beta chain family. In terms of assembly, the DNA-dependent RNA polymerase used for intermediate and late genes expression consists of eight subunits (147) kDa, (133) kDa, (35) kDa, (30) kDa, (22) kDa, (19) kDa, (18) kDa and (7) kDa totalling more than 500 kDa in mass. The same holoenzyme, with the addition of the transcription-specificity factor RAP94, is used for early gene expression.

Its subcellular location is the virion. The catalysed reaction is RNA(n) + a ribonucleoside 5'-triphosphate = RNA(n+1) + diphosphate. Part of the DNA-dependent RNA polymerase which catalyzes the transcription of viral DNA into RNA using the four ribonucleoside triphosphates as substrates. Responsible for the transcription of early, intermediate and late genes. DNA-dependent RNA polymerase associates with the early transcription factor (ETF), itself composed of D6 and A7, thereby allowing the early genes transcription. Late transcription, and probably also intermediate transcription, require newly synthesized RNA polymerase. The polypeptide is DNA-directed RNA polymerase 132 kDa polypeptide (RPO132) (Mus musculus (Mouse)).